Reading from the N-terminus, the 261-residue chain is 14-3-3-like protein B (261 aa).

A disordered region spans residues 237–261 (DIPEDGEDSQKANGTAKFGGGDDAE).

Belongs to the 14-3-3 family.

The polypeptide is 14-3-3-like protein B (Vicia faba (Broad bean)).